Reading from the N-terminus, the 504-residue chain is 5-epiaristolochene 1,3-dihydroxylase (504 aa).

A helical membrane pass occupies residues Q2–W22. Residue C442 coordinates heme.

The protein belongs to the cytochrome P450 family. It depends on heme as a cofactor.

It localises to the membrane. The catalysed reaction is (+)-5-epi-aristolochene + 2 reduced [NADPH--hemoprotein reductase] + 2 O2 = capsidiol + 2 oxidized [NADPH--hemoprotein reductase] + 2 H2O + 2 H(+). With respect to regulation, inhibited by ancymidol and ketoconazole. Functionally, involved in the biosynthesis of capsidiol. Catalyzes the successive and independent hydroxylations at the C1 and C3 positions of 5-epiaristolochene. The second hydroxylation step is 8-fold more efficient than the first hydroxylation reaction. Capable of utilizing premnaspirodiene as a substrate. The chain is 5-epiaristolochene 1,3-dihydroxylase (CYP71D20) from Nicotiana tabacum (Common tobacco).